The following is a 1028-amino-acid chain: Contactin-3 (1028 aa).

An N-terminal signal peptide occupies residues 1–19 (MMLSWKQLILLSFIGCLAG). Ig-like C2-type domains lie at 32–117 (PSNS…AKLQ), 122–209 (ENFK…RVLG), 227–313 (PKIE…GRLT), 318–402 (PYWL…AELK), 408–497 (PDFS…LVVT), and 499–593 (PTRI…AELI). 5 disulfide bridges follow: C50–C100, C144–C196, C249–C297, C339–C386, and C431–C479. 2 N-linked (GlcNAc...) asparagine glycosylation sites follow: N65 and N193. Residues N377, N468, and N489 are each glycosylated (N-linked (GlcNAc...) asparagine). The cysteines at positions 521 and 577 are disulfide-linked. Fibronectin type-III domains follow at residues 600–698 (PPEN…TEEA), 703–800 (APSE…SAEE), 805–901 (APSH…TKKT), and 902–998 (PPSQ…TSMD). The disordered stretch occupies residues 684 to 714 (GEPSLPSEKVRTEEAAPEIAPSEVSGGGGSR). N-linked (GlcNAc...) asparagine glycans are attached at residues N765, N860, N895, N913, N931, and N956. The GPI-anchor amidated serine moiety is linked to residue S1002. Positions 1003–1028 (TSAISNIHPLSGYMSVLLFFIVNALW) are cleaved as a propeptide — removed in mature form.

Belongs to the immunoglobulin superfamily. Contactin family. In terms of assembly, interacts with PTPRG. As to expression, specifically expressed in brain. Ectopically expressed in tumors expressing endogenous intracisternal A-type particles (IAPs).

Its subcellular location is the cell membrane. Functionally, contactins mediate cell surface interactions during nervous system development. Has some neurite outgrowth-promoting activity. In Mus musculus (Mouse), this protein is Contactin-3 (Cntn3).